The following is a 417-amino-acid chain: Fructose-1,6-bisphosphatase 1, chloroplastic (417 aa).

The N-terminal 59 residues, 1 to 59 (MAATAATTTSSHLLLSSSRHVASSSQPSILSPRSLFSNNGKRAPTGVRNHQYASGVRCM), are a transit peptide targeting the chloroplast. The span at 24–35 (SSQPSILSPRSL) shows a compositional bias: low complexity. Residues 24–48 (SSQPSILSPRSLFSNNGKRAPTGVR) are disordered. N-acetylalanine is present on A60. The Mg(2+) site is built by E138, E167, D188, L190, and D191. Position 191–194 (191–194 (DGSS)) interacts with substrate. The cysteines at positions 233 and 238 are disulfide-linked. Substrate is bound by residues N297, Y329, Y347, Y349, and K359. Position 365 (E365) interacts with Mg(2+).

The protein belongs to the FBPase class 1 family. Homotetramer. Mg(2+) serves as cofactor.

The protein localises to the plastid. It localises to the chloroplast stroma. The catalysed reaction is beta-D-fructose 1,6-bisphosphate + H2O = beta-D-fructose 6-phosphate + phosphate. Its pathway is carbohydrate biosynthesis; Calvin cycle. Its function is as follows. Catalyzes the irreversible reaction from fructose-1,6-bisphosphate to fructose-6-phosphate and inorganic phosphate, to regenerate the primary CO(2) acceptor molecule, ribulose-1,5-bisphosphate. Involved in the regulation of photosynthetic electron flow and sucrose synthesis. Its activity is critical for normal plant development and important for the regulation of a wide range of metabolic processes. This is Fructose-1,6-bisphosphatase 1, chloroplastic from Arabidopsis thaliana (Mouse-ear cress).